The sequence spans 159 residues: MNISIISIGKLKEKYLKQGIAEYLKRLSAYAKVEVIELPDEKAPENLSEAEMLIVKEKEGIRILDKISDDTHVIALAIEGKQKSSEEFAVSLDRLATYGKSKVAFVIGGSLGLSSEVMKRSNESLSFSKMTLPHQLMRLVLLEQVYRSFRINRGEPYHK.

S-adenosyl-L-methionine-binding positions include L76, G108, and 127 to 132 (FSKMTL).

This sequence belongs to the RNA methyltransferase RlmH family. As to quaternary structure, homodimer.

It localises to the cytoplasm. It catalyses the reaction pseudouridine(1915) in 23S rRNA + S-adenosyl-L-methionine = N(3)-methylpseudouridine(1915) in 23S rRNA + S-adenosyl-L-homocysteine + H(+). Functionally, specifically methylates the pseudouridine at position 1915 (m3Psi1915) in 23S rRNA. This chain is Ribosomal RNA large subunit methyltransferase H, found in Bacillus thuringiensis subsp. konkukian (strain 97-27).